The sequence spans 188 residues: Large ribosomal subunit protein bL35m (188 aa).

It belongs to the bacterial ribosomal protein bL35 family.

It is found in the mitochondrion. The sequence is that of Large ribosomal subunit protein bL35m (MRPL35) from Pongo abelii (Sumatran orangutan).